Consider the following 733-residue polypeptide: Cell division cycle protein 48 homolog AF_1297 (733 aa).

ATP contacts are provided by residues 223-230 (GPPGTGKT) and 496-503 (GPPGTGKT).

Belongs to the AAA ATPase family. CDC48 subfamily.

The polypeptide is Cell division cycle protein 48 homolog AF_1297 (Archaeoglobus fulgidus (strain ATCC 49558 / DSM 4304 / JCM 9628 / NBRC 100126 / VC-16)).